The chain runs to 739 residues: Eukaryotic translation initiation factor 3 subunit B (739 aa).

The interval M1–S98 is sufficient for interaction with HCR1 and TIF32. The segment at M1–F224 is sufficient for interaction with PIC8. Residues N37–D124 enclose the RRM domain. 7 WD repeats span residues P190–R229, F231–A293, Q301–D339, V343–R385, E453–V502, I537–K579, and D592–T630.

The protein belongs to the eIF-3 subunit B family. Component of the eukaryotic translation initiation factor 3 (eIF-3) complex.

Its subcellular location is the cytoplasm. Its function is as follows. RNA-binding component of the eukaryotic translation initiation factor 3 (eIF-3) complex, which is involved in protein synthesis of a specialized repertoire of mRNAs and, together with other initiation factors, stimulates binding of mRNA and methionyl-tRNAi to the 40S ribosome. The eIF-3 complex specifically targets and initiates translation of a subset of mRNAs involved in cell proliferation. This chain is Eukaryotic translation initiation factor 3 subunit B, found in Candida albicans (strain SC5314 / ATCC MYA-2876) (Yeast).